The chain runs to 289 residues: Thioredoxin-like protein 1 (289 aa).

The region spanning V2–N109 is the Thioredoxin domain. A disulfide bridge connects residues C34 and C37. Position 113 is a phosphoserine (S113). A PITH domain is found at E115 to K285.

As to quaternary structure, component of the 19S regulatory cap of the 26S proteasome. Interacts with PSMD14/RPN11. Interacts with, and reduces EEF1A1.

The protein localises to the cytoplasm. The protein resides in the nucleus. In terms of biological role, active thioredoxin with a redox potential of about -250 mV. This chain is Thioredoxin-like protein 1 (Txnl1), found in Rattus norvegicus (Rat).